We begin with the raw amino-acid sequence, 111 residues long: UPF0339 protein ACIAD0721 (111 aa).

Tandem repeats lie at residues 10–58 (AKDG…RYER) and 61–109 (AKND…VKDL). The segment at 89–111 (SRDKGIESVKNNGTTATVKDLTG) is disordered.

The protein belongs to the UPF0339 family. Duplicated subfamily.

This is UPF0339 protein ACIAD0721 from Acinetobacter baylyi (strain ATCC 33305 / BD413 / ADP1).